The following is a 426-amino-acid chain: Probable inactive metalloprotease YmfF (426 aa).

Positions 50 and 138 each coordinate Zn(2+).

Belongs to the peptidase M16 family.

In Bacillus subtilis (strain 168), this protein is Probable inactive metalloprotease YmfF (ymfF).